The following is a 427-amino-acid chain: Adenylosuccinate synthetase (427 aa).

GTP contacts are provided by residues 12-18 and 40-42; these read GDEGKGK and GHT. Asp13 (proton acceptor) is an active-site residue. Mg(2+)-binding residues include Asp13 and Gly40. Residues 13 to 16, 38 to 41, Thr128, Arg142, Gln223, Thr238, and Arg302 contribute to the IMP site; these read DEGK and NAGH. The Proton donor role is filled by His41. 298–304 contributes to the substrate binding site; it reads VTTGRDR. GTP-binding positions include Arg304, 330-332, and 412-414; these read KLD and GVG.

It belongs to the adenylosuccinate synthetase family. Homodimer. Mg(2+) is required as a cofactor.

Its subcellular location is the cytoplasm. It catalyses the reaction IMP + L-aspartate + GTP = N(6)-(1,2-dicarboxyethyl)-AMP + GDP + phosphate + 2 H(+). It functions in the pathway purine metabolism; AMP biosynthesis via de novo pathway; AMP from IMP: step 1/2. Functionally, plays an important role in the de novo pathway of purine nucleotide biosynthesis. Catalyzes the first committed step in the biosynthesis of AMP from IMP. The protein is Adenylosuccinate synthetase of Streptomyces griseus subsp. griseus (strain JCM 4626 / CBS 651.72 / NBRC 13350 / KCC S-0626 / ISP 5235).